Reading from the N-terminus, the 202-residue chain is Imidazoleglycerol-phosphate dehydratase (202 aa).

The protein belongs to the imidazoleglycerol-phosphate dehydratase family.

It localises to the cytoplasm. It catalyses the reaction D-erythro-1-(imidazol-4-yl)glycerol 3-phosphate = 3-(imidazol-4-yl)-2-oxopropyl phosphate + H2O. Its pathway is amino-acid biosynthesis; L-histidine biosynthesis; L-histidine from 5-phospho-alpha-D-ribose 1-diphosphate: step 6/9. The sequence is that of Imidazoleglycerol-phosphate dehydratase from Chelativorans sp. (strain BNC1).